We begin with the raw amino-acid sequence, 447 residues long: Argininosuccinate synthase (447 aa).

Residues 17–25 and Ala43 contribute to the ATP site; that span reads AFSGGLDTS. Tyr99 lines the L-citrulline pocket. 2 residues coordinate ATP: Gly129 and Thr131. L-aspartate-binding residues include Thr131, Asn135, and Asp136. An L-citrulline-binding site is contributed by Asn135. Asp136 serves as a coordination point for ATP. The L-citrulline site is built by Arg139 and Ser192. Asp194 is a binding site for ATP. Positions 201, 203, and 280 each coordinate L-citrulline.

This sequence belongs to the argininosuccinate synthase family. Type 2 subfamily. Homotetramer.

It localises to the cytoplasm. It carries out the reaction L-citrulline + L-aspartate + ATP = 2-(N(omega)-L-arginino)succinate + AMP + diphosphate + H(+). It participates in amino-acid biosynthesis; L-arginine biosynthesis; L-arginine from L-ornithine and carbamoyl phosphate: step 2/3. In Klebsiella pneumoniae subsp. pneumoniae (strain ATCC 700721 / MGH 78578), this protein is Argininosuccinate synthase.